The following is a 212-amino-acid chain: Large ribosomal subunit protein uL3 (212 aa).

Gln-153 carries the post-translational modification N5-methylglutamine.

It belongs to the universal ribosomal protein uL3 family. In terms of assembly, part of the 50S ribosomal subunit. Forms a cluster with proteins L14 and L19. Methylated by PrmB.

Its function is as follows. One of the primary rRNA binding proteins, it binds directly near the 3'-end of the 23S rRNA, where it nucleates assembly of the 50S subunit. The sequence is that of Large ribosomal subunit protein uL3 from Idiomarina loihiensis (strain ATCC BAA-735 / DSM 15497 / L2-TR).